We begin with the raw amino-acid sequence, 103 residues long: Pyrimidine/purine nucleoside phosphorylase (103 aa).

Belongs to the nucleoside phosphorylase PpnP family.

It catalyses the reaction a purine D-ribonucleoside + phosphate = a purine nucleobase + alpha-D-ribose 1-phosphate. The catalysed reaction is adenosine + phosphate = alpha-D-ribose 1-phosphate + adenine. The enzyme catalyses cytidine + phosphate = cytosine + alpha-D-ribose 1-phosphate. It carries out the reaction guanosine + phosphate = alpha-D-ribose 1-phosphate + guanine. It catalyses the reaction inosine + phosphate = alpha-D-ribose 1-phosphate + hypoxanthine. The catalysed reaction is thymidine + phosphate = 2-deoxy-alpha-D-ribose 1-phosphate + thymine. The enzyme catalyses uridine + phosphate = alpha-D-ribose 1-phosphate + uracil. It carries out the reaction xanthosine + phosphate = alpha-D-ribose 1-phosphate + xanthine. In terms of biological role, catalyzes the phosphorolysis of diverse nucleosides, yielding D-ribose 1-phosphate and the respective free bases. Can use uridine, adenosine, guanosine, cytidine, thymidine, inosine and xanthosine as substrates. Also catalyzes the reverse reactions. The polypeptide is Pyrimidine/purine nucleoside phosphorylase (Methylobacillus flagellatus (strain ATCC 51484 / DSM 6875 / VKM B-1610 / KT)).